Here is a 212-residue protein sequence, read N- to C-terminus: ER lumen protein-retaining receptor 2 (212 aa).

Over 1–4 (MNIF) the chain is Lumenal. Residues 5-24 (RLTGDLSHLAAIVILLLKIW) form a helical membrane-spanning segment. Over 25–32 (KTRSCAGI) the chain is Cytoplasmic. A helical transmembrane segment spans residues 33-52 (SGKSQLLFALVFTTRYLDLF). Positions 47-48 (RY) are interaction with the K-D-E-L motif on target proteins. Over 53–58 (TSFISL) the chain is Lumenal. Residues 59–79 (YNTSMKLIYIACSYATVYLIY) form a helical membrane-spanning segment. Over 80 to 92 (MKFKATYDGNHDT) the chain is Cytoplasmic. Residues 93–110 (FRVEFLVVPVGGLSFLVN) traverse the membrane as a helical segment. Topologically, residues 111–116 (HDFSPL) are lumenal. Residues 117–135 (EILWTFSIYLESVAILPQL) form a helical membrane-spanning segment. Over 136 to 149 (FMISKTGEAETITT) the chain is Cytoplasmic. The helical transmembrane segment at 150 to 168 (HYLFFLGLYRALYLVNWIW) threads the bilayer. The segment at 159–169 (RALYLVNWIWR) is interaction with the K-D-E-L motif on target proteins. At 169–178 (RFYFEGFFDL) the chain is on the lumenal side. Residues 179–199 (IAVVAGVVQTILYCDFFYLYI) traverse the membrane as a helical segment. Topologically, residues 200–212 (TKVLKGKKLSLPA) are cytoplasmic. Residues 204-207 (KGKK) form an important for recycling of cargo proteins with the sequence motif K-D-E-L from the Golgi to the endoplasmic reticulum region.

This sequence belongs to the ERD2 family.

It is found in the endoplasmic reticulum membrane. It localises to the golgi apparatus membrane. Its subcellular location is the cytoplasmic vesicle. The protein resides in the COPI-coated vesicle membrane. Membrane receptor that binds the K-D-E-L sequence motif in the C-terminal part of endoplasmic reticulum resident proteins and maintains their localization in that compartment by participating to their vesicle-mediated recycling back from the Golgi. Binding is pH dependent, and is optimal at pH 5-5.4. This is ER lumen protein-retaining receptor 2 (Kdelr2) from Mus musculus (Mouse).